The sequence spans 340 residues: S-adenosylmethionine:tRNA ribosyltransferase-isomerase (340 aa).

This sequence belongs to the QueA family. Monomer.

It localises to the cytoplasm. The enzyme catalyses 7-aminomethyl-7-carbaguanosine(34) in tRNA + S-adenosyl-L-methionine = epoxyqueuosine(34) in tRNA + adenine + L-methionine + 2 H(+). Its pathway is tRNA modification; tRNA-queuosine biosynthesis. Its function is as follows. Transfers and isomerizes the ribose moiety from AdoMet to the 7-aminomethyl group of 7-deazaguanine (preQ1-tRNA) to give epoxyqueuosine (oQ-tRNA). The protein is S-adenosylmethionine:tRNA ribosyltransferase-isomerase of Vesicomyosocius okutanii subsp. Calyptogena okutanii (strain HA).